A 273-amino-acid polypeptide reads, in one-letter code: 5-deoxy-glucuronate isomerase (273 aa).

This sequence belongs to the isomerase IolB family.

The enzyme catalyses 5-deoxy-D-glucuronate = 5-dehydro-2-deoxy-D-gluconate. Its pathway is polyol metabolism; myo-inositol degradation into acetyl-CoA; acetyl-CoA from myo-inositol: step 4/7. Its function is as follows. Involved in the isomerization of 5-deoxy-glucuronate (5DG) to 5-dehydro-2-deoxy-D-gluconate (DKG or 2-deoxy-5-keto-D-gluconate). The sequence is that of 5-deoxy-glucuronate isomerase from Listeria monocytogenes serotype 4a (strain HCC23).